The following is a 136-amino-acid chain: MLQPKRTKFRKVHKGRNRGIAAGTEVSFGTFGLKAVGRGRLTARQIEAARRAMTRAVKRQGKIWIRVFPDKPITEKPLEVRMGKGKGNVEYWVALIQPGKVMYEMDGVSEEVARHAFALAAAKLPIKTTFVTKTVM.

This sequence belongs to the universal ribosomal protein uL16 family. Part of the 50S ribosomal subunit.

In terms of biological role, binds 23S rRNA and is also seen to make contacts with the A and possibly P site tRNAs. The sequence is that of Large ribosomal subunit protein uL16 from Histophilus somni (strain 129Pt) (Haemophilus somnus).